A 322-amino-acid polypeptide reads, in one-letter code: Ferredoxin--NADP reductase (322 aa).

The FAD site is built by Asp-34, Gln-42, Tyr-47, Val-87, Phe-120, Asp-279, and Thr-320.

Belongs to the ferredoxin--NADP reductase type 2 family. In terms of assembly, homodimer. FAD serves as cofactor.

The catalysed reaction is 2 reduced [2Fe-2S]-[ferredoxin] + NADP(+) + H(+) = 2 oxidized [2Fe-2S]-[ferredoxin] + NADPH. This chain is Ferredoxin--NADP reductase, found in Streptococcus pneumoniae serotype 2 (strain D39 / NCTC 7466).